We begin with the raw amino-acid sequence, 45 residues long: COP9 signalosome complex subunit 4 (45 aa).

Belongs to the CSN4 family. In terms of assembly, component of the CSN complex, probably composed of CSN1, CSN2, CSN3, CSN4, CSN5 (CSN5A or CSN5B), CSN6 (CSN6A or CSN6B), CSN7 and CSN8.

The protein resides in the cytoplasm. The protein localises to the nucleus. Component of the COP9 signalosome complex (CSN), a complex involved in various cellular and developmental processes such as photomorphogenesis and auxin and jasmonate responses. The CSN complex is an essential regulator of the ubiquitin (Ubl) conjugation pathway by mediating the deneddylation of the cullin subunits of SCF-type E3 ligase complexes, leading to decrease the Ubl ligase activity of SCF. It is involved in repression of photomorphogenesis in darkness by regulating the activity of COP1-containing Ubl ligase complexes. The protein is COP9 signalosome complex subunit 4 (CSN4) of Brassica oleracea (Wild cabbage).